The primary structure comprises 306 residues: MLPYIALILVCWSVLSQAAQTDVEGRADKRRPIWIMGHMVNAIAQIDEFVNLGANSIETDVSFDDNANPEYTYHGVPCDCGRSCLKWENFNDFLKGLRSATTPGNAKYQAKLILVVFDLKTGSLYDNQANEAGKKLAKNLLKHYWNNGNNGGRAYIVLSIPDLNHYPLIKGFKDQLTQDGHPELMDKVGHDFSGNDAIGDVGNAYKKAGISGHVWQSDGITNCLLRGLDRVKQAIANRDSGNGFINKVYYWTVDKRATTRDALDAGVDGVMTNYPDVITDVLNESAYKNKFRVASYEDNPWETFKK.

An N-terminal signal peptide occupies residues 1–18; that stretch reads MLPYIALILVCWSVLSQA. Residues 19-26 constitute a propeptide that is removed on maturation; it reads AQTDVEGR. Histidine 38 is a catalytic residue. Mg(2+) contacts are provided by glutamate 58 and aspartate 60. Histidine 74 functions as the Nucleophile in the catalytic mechanism. 2 cysteine pairs are disulfide-bonded: cysteine 78–cysteine 84 and cysteine 80–cysteine 223. Aspartate 118 lines the Mg(2+) pocket. N-linked (GlcNAc...) asparagine glycosylation is present at asparagine 283.

It belongs to the arthropod phospholipase D family. Class II subfamily. It depends on Mg(2+) as a cofactor. As to expression, expressed by the venom gland.

Its subcellular location is the secreted. It carries out the reaction an N-(acyl)-sphingosylphosphocholine = an N-(acyl)-sphingosyl-1,3-cyclic phosphate + choline. The enzyme catalyses an N-(acyl)-sphingosylphosphoethanolamine = an N-(acyl)-sphingosyl-1,3-cyclic phosphate + ethanolamine. The catalysed reaction is a 1-acyl-sn-glycero-3-phosphocholine = a 1-acyl-sn-glycero-2,3-cyclic phosphate + choline. It catalyses the reaction a 1-acyl-sn-glycero-3-phosphoethanolamine = a 1-acyl-sn-glycero-2,3-cyclic phosphate + ethanolamine. Dermonecrotic toxins cleave the phosphodiester linkage between the phosphate and headgroup of certain phospholipids (sphingolipid and lysolipid substrates), forming an alcohol (often choline) and a cyclic phosphate. This toxin acts on sphingomyelin (SM). It may also act on ceramide phosphoethanolamine (CPE), lysophosphatidylcholine (LPC) and lysophosphatidylethanolamine (LPE), but not on lysophosphatidylserine (LPS), and lysophosphatidylglycerol (LPG). It acts by transphosphatidylation, releasing exclusively cyclic phosphate products as second products. Induces dermonecrosis, hemolysis, increased vascular permeability, edema, inflammatory response, and platelet aggregation. The chain is Dermonecrotic toxin LiSicTox-alphaIA2bi from Loxosceles intermedia (Brown spider).